We begin with the raw amino-acid sequence, 309 residues long: Probable manganese-dependent inorganic pyrophosphatase (309 aa).

Mn(2+)-binding residues include H9, D13, D15, D75, H97, and D149.

This sequence belongs to the PPase class C family. Mn(2+) serves as cofactor.

It is found in the cytoplasm. The catalysed reaction is diphosphate + H2O = 2 phosphate + H(+). The sequence is that of Probable manganese-dependent inorganic pyrophosphatase from Bacillus cereus (strain G9842).